A 308-amino-acid polypeptide reads, in one-letter code: Homeobox-leucine zipper protein HOX2 (308 aa).

2 disordered regions span residues 15 to 36 (QGSL…SSPW) and 71 to 117 (QGRA…RKKL). Residues 74 to 88 (ASTSPDSAAALSSAS) are compositionally biased toward low complexity. A DNA-binding region (homeobox) is located at residues 112–171 (GGRKKLRLSKDQAAVLEECFKTHSTLNPKQKVALANRLGLRPRQVEVWFQNRRARTKLKQ). Positions 170 to 214 (KQTEVDCEYLKRWCERLADENKRLEKELADLRALKAAPSPASASA) are leucine-zipper.

This sequence belongs to the HD-ZIP homeobox family. Class II subfamily. Homodimer. May form a heterodimer with HOX1, HOX3 or HOX7. In terms of tissue distribution, expressed in seedlings, roots, leaves, nodes, internodes, flowers and embryo.

Its subcellular location is the nucleus. Probable transcription factor that binds to the DNA sequence 5'-CAAT[GC]ATTG-3'. This chain is Homeobox-leucine zipper protein HOX2 (HOX2), found in Oryza sativa subsp. indica (Rice).